A 349-amino-acid chain; its full sequence is Sperm acrosomal protein FSA-ACR.1 (349 aa).

An N-terminal signal peptide occupies residues Met1–Gly8. The segment at Met1–Ser265 is disordered. Basic and acidic residues predominate over residues Thr63–Ser114. 2 stretches are compositionally biased toward polar residues: residues Gln117 to Gln142 and Ser154 to Glu171. Residues Pro178 to Ser189 are compositionally biased toward basic and acidic residues. Residues Glu221–Ala248 show a composition bias toward low complexity. A glycan (N-linked (GlcNAc...) asparagine) is linked at Asn342.

This sequence to acrosomal proteins SP-10. In terms of tissue distribution, testis.

The protein resides in the cytoplasmic vesicle. It is found in the secretory vesicle. The protein localises to the acrosome. This is Sperm acrosomal protein FSA-ACR.1 from Vulpes vulpes (Red fox).